The primary structure comprises 592 residues: Bifunctional dolabella-3,7-dien-18-ol synthase/dolathalia-3,7,11-triene synthase TPS20, chloroplastic (592 aa).

A chloroplast-targeting transit peptide spans 1-52 (MEAITKNGSLSQTLVHCGPKSLSSFIPVRCLRFSKNPFPKKLVVTRARTSIN). Residues Asp349, Asp353, Asp491, Thr495, and Glu499 each coordinate Mg(2+). Positions 349 to 353 (DDLYD) match the DDXXD motif motif.

This sequence belongs to the terpene synthase family. Tpsa subfamily. It depends on Mg(2+) as a cofactor. Mn(2+) serves as cofactor.

It localises to the plastid. The protein resides in the chloroplast. The catalysed reaction is (2E,6E,10E)-geranylgeranyl diphosphate + H2O = (3E,7E)-dolabella-3,7-dien-18-ol + diphosphate. It carries out the reaction (2E,6E,10E)-geranylgeranyl diphosphate = (3E,7E)-dolathalia-3,7,11-triene + diphosphate. The protein operates within secondary metabolite biosynthesis; terpenoid biosynthesis. Involved in the biosynthesis of diterpenes in roots. Possesses dolabella-3,7-dien-18-ol synthase activity and dolathalia-3,7,11-triene synthase activity in vitro. Catalyzes the formation of dolabella-3,7-dien-18-ol and dolathalia-3,7,11-triene from geranygeranyl diphosphate (GGPP). Does not seem to be involved in sesquiterpene biosynthesis. The sequence is that of Bifunctional dolabella-3,7-dien-18-ol synthase/dolathalia-3,7,11-triene synthase TPS20, chloroplastic from Arabidopsis thaliana (Mouse-ear cress).